A 437-amino-acid polypeptide reads, in one-letter code: Trigger factor (437 aa).

One can recognise a PPIase FKBP-type domain in the interval 161 to 246 (DDQVNIDFVG…VNSVSAPVLP (86 aa)).

The protein belongs to the FKBP-type PPIase family. Tig subfamily.

Its subcellular location is the cytoplasm. The enzyme catalyses [protein]-peptidylproline (omega=180) = [protein]-peptidylproline (omega=0). Involved in protein export. Acts as a chaperone by maintaining the newly synthesized protein in an open conformation. Functions as a peptidyl-prolyl cis-trans isomerase. The protein is Trigger factor of Pseudomonas putida (strain ATCC 700007 / DSM 6899 / JCM 31910 / BCRC 17059 / LMG 24140 / F1).